Here is a 145-residue protein sequence, read N- to C-terminus: Immunity protein CdiI (145 aa).

As to quaternary structure, interacts with cognate toxin fragment CdiA-CT.

In terms of biological role, immunity protein component of a toxin-immunity protein module, which functions as a cellular contact-dependent growth inhibition (CDI) system. CDI modules allow bacteria to communicate with and inhibit the growth of closely related neighboring bacteria in a contact-dependent fashion. Protects cells against the 16S rRNase activity of CdiA-CT, its cognate toxin protein, but not against the toxic effects of a similar rRNase, non-cognate CdiA-CT from E.chrysanthemi strain EC16. This Enterobacter cloacae subsp. cloacae (strain ATCC 13047 / DSM 30054 / NBRC 13535 / NCTC 10005 / WDCM 00083 / NCDC 279-56) protein is Immunity protein CdiI.